Consider the following 374-residue polypeptide: Chaperone protein DnaJ (374 aa).

The J domain maps to 5–70; that stretch reads DYYEVLGVER…SKRAAFDQYG (66 aa). Residues 133-211 form a CR-type zinc finger; it reads GTTVSIRVPT…CHGEGRVEEY (79 aa). 8 residues coordinate Zn(2+): Cys-146, Cys-149, Cys-163, Cys-166, Cys-185, Cys-188, Cys-199, and Cys-202. CXXCXGXG motif repeat units follow at residues 146-153, 163-170, 185-192, and 199-206; these read CQPCDGSG, CPTCGGIG, CPRCHGQG, and CTSCHGEG.

Belongs to the DnaJ family. As to quaternary structure, homodimer. It depends on Zn(2+) as a cofactor.

The protein localises to the cytoplasm. Participates actively in the response to hyperosmotic and heat shock by preventing the aggregation of stress-denatured proteins and by disaggregating proteins, also in an autonomous, DnaK-independent fashion. Unfolded proteins bind initially to DnaJ; upon interaction with the DnaJ-bound protein, DnaK hydrolyzes its bound ATP, resulting in the formation of a stable complex. GrpE releases ADP from DnaK; ATP binding to DnaK triggers the release of the substrate protein, thus completing the reaction cycle. Several rounds of ATP-dependent interactions between DnaJ, DnaK and GrpE are required for fully efficient folding. Also involved, together with DnaK and GrpE, in the DNA replication of plasmids through activation of initiation proteins. The sequence is that of Chaperone protein DnaJ from Pseudomonas putida (strain GB-1).